Consider the following 145-residue polypeptide: Large ribosomal subunit protein bL17 (145 aa).

This sequence belongs to the bacterial ribosomal protein bL17 family. Part of the 50S ribosomal subunit. Contacts protein L32.

The sequence is that of Large ribosomal subunit protein bL17 from Orientia tsutsugamushi (strain Ikeda) (Rickettsia tsutsugamushi).